A 276-amino-acid polypeptide reads, in one-letter code: Rhamnulose-1-phosphate aldolase (276 aa).

Glu117 is a catalytic residue. 3 residues coordinate Zn(2+): His141, His143, and His212.

It belongs to the aldolase class II family. RhaD subfamily. As to quaternary structure, homotetramer. Requires Zn(2+) as cofactor.

Its subcellular location is the cytoplasm. The enzyme catalyses L-rhamnulose 1-phosphate = (S)-lactaldehyde + dihydroxyacetone phosphate. It functions in the pathway carbohydrate degradation; L-rhamnose degradation; glycerone phosphate from L-rhamnose: step 3/3. In terms of biological role, catalyzes the reversible cleavage of L-rhamnulose-1-phosphate to dihydroxyacetone phosphate (DHAP) and L-lactaldehyde. The sequence is that of Rhamnulose-1-phosphate aldolase from Klebsiella pneumoniae (strain 342).